We begin with the raw amino-acid sequence, 426 residues long: Glutamyl-tRNA reductase (426 aa).

Residues 51-54, Ser-110, 115-117, and Gln-121 contribute to the substrate site; these read TCNR and EAQ. Catalysis depends on Cys-52, which acts as the Nucleophile. An NADP(+)-binding site is contributed by 190–195; it reads GAGEMA.

This sequence belongs to the glutamyl-tRNA reductase family. As to quaternary structure, homodimer.

It carries out the reaction (S)-4-amino-5-oxopentanoate + tRNA(Glu) + NADP(+) = L-glutamyl-tRNA(Glu) + NADPH + H(+). The protein operates within porphyrin-containing compound metabolism; protoporphyrin-IX biosynthesis; 5-aminolevulinate from L-glutamyl-tRNA(Glu): step 1/2. Catalyzes the NADPH-dependent reduction of glutamyl-tRNA(Glu) to glutamate 1-semialdehyde (GSA). In Desulfotalea psychrophila (strain LSv54 / DSM 12343), this protein is Glutamyl-tRNA reductase.